Consider the following 230-residue polypeptide: Heptaprenylglyceryl phosphate synthase (230 aa).

Residue K12 participates in sn-glycerol 1-phosphate binding. The Mg(2+) site is built by D14 and T40. Residues 159 to 164 (YVEYSG), G189, and 209 to 210 (GD) each bind sn-glycerol 1-phosphate.

The protein belongs to the GGGP/HepGP synthase family. Group I subfamily. As to quaternary structure, homodimer. The cofactor is Mg(2+).

The enzyme catalyses sn-glycerol 1-phosphate + all-trans-heptaprenyl diphosphate = 3-heptaprenyl-sn-glycero-1-phosphate + diphosphate. Its pathway is membrane lipid metabolism; glycerophospholipid metabolism. Its function is as follows. Prenyltransferase that catalyzes in vivo the transfer of the heptaprenyl moiety of heptaprenyl pyrophosphate (HepPP; 35 carbon atoms) to the C3 hydroxyl of sn-glycerol-1-phosphate (G1P), producing heptaprenylglyceryl phosphate (HepGP). This reaction is an ether-bond-formation step in the biosynthesis of archaea-type G1P-based membrane lipids found in Bacillales. The sequence is that of Heptaprenylglyceryl phosphate synthase from Staphylococcus epidermidis (strain ATCC 35984 / DSM 28319 / BCRC 17069 / CCUG 31568 / BM 3577 / RP62A).